Reading from the N-terminus, the 521-residue chain is MDNDSQYSGYSYKSGQSRSSRKHRDRRERHRSKSREGSRGDKSVTIQAPGEPLLDNESTRGEDRDDNWGETTTVVTGTSEHSISHDDITRITKDMEDSAKLDCSRHLGVVIAGALALLSFLTPIAFMLLPQILWREDLEQCGTACEGLFISVAFKLLILLLGSWALFFRRPKAFFPRVFVFRALLMVLVFLLVVSYWLFYGVRILESRDKNYQGIVQYAVSLVDALLFVHYLAVVLLELRQLQPQFTIKVVRSTDGASRFYNIGHLSIQRVAVWILENYYHDFPVYNPALLNLPKSILSKKMSGFKVYSLGEENNTNNSTGQSRAVIAAAARRRDNSHNEYYYEEAEHERRVRKRKARLVVAVEEAFTHIKRLQDEDPKNPREIMDPREAAQAIFASMARAMQKYLRTTKQQPYHTMESILQHLEFCITHDMTPKAFLERYLGPGPTIQYHKDRWLAKQWTLVSEEPVTNGLKDGVVFELKRQDFSLVVSTKKIPFFKLSEEFVDPKSHKFVMRLQSETSV.

The span at 1–18 (MDNDSQYSGYSYKSGQSR) shows a compositional bias: low complexity. A disordered region spans residues 1–73 (MDNDSQYSGY…RDDNWGETTT (73 aa)). Residues 1-108 (MDNDSQYSGY…AKLDCSRHLG (108 aa)) are Cytoplasmic-facing. The segment covering 19-33 (SSRKHRDRRERHRSK) has biased composition (basic residues). A compositionally biased stretch (basic and acidic residues) spans 57 to 67 (ESTRGEDRDDN). The chain crosses the membrane as a helical span at residues 109–129 (VVIAGALALLSFLTPIAFMLL). At 130-147 (PQILWREDLEQCGTACEG) the chain is on the extracellular side. A helical membrane pass occupies residues 148-168 (LFISVAFKLLILLLGSWALFF). The Cytoplasmic segment spans residues 169–178 (RRPKAFFPRV). The chain crosses the membrane as a helical span at residues 179-199 (FVFRALLMVLVFLLVVSYWLF). The Extracellular portion of the chain corresponds to 200–218 (YGVRILESRDKNYQGIVQY). Residues 219–239 (AVSLVDALLFVHYLAVVLLEL) traverse the membrane as a helical segment. Topologically, residues 240-521 (RQLQPQFTIK…VMRLQSETSV (282 aa)) are cytoplasmic. The PDZ-binding signature appears at 518–521 (ETSV).

This sequence belongs to the Vang family. As to quaternary structure, interacts with dvl/dsh. Interacts with prickle3. As to expression, during gastrulation, broadly expressed in the dorsal region in both mesodermal and neural tissues. From the neurula stages, expressed throughout the neural tube. In tailbud stages, expression declines in the anterior notochord but remains strong in the posterior notochord and in the neural tube. Also weakly expressed in the prenephritic region of late tailbud embryos.

It localises to the cell membrane. Has a role in non-canonical Wnt/planar cell polarity (PCP) signaling; can recruit dvl/dsh and prickle from the cytoplasm to the plasma membrane. Acts in a PCP complex to regulate the polarized assembly of fibronectrin on the surface of the mesoderm during gastrulation. Regulates convergent extension in both dorsal mesoderm and neural tissue without affecting cell fate. Regulates neural fold closure during neurulation. May be required for cell surface localization of fzd3 and fzd6 in the inner ear. This chain is Vang-like protein 2-B (vangl2-b), found in Xenopus laevis (African clawed frog).